Here is a 124-residue protein sequence, read N- to C-terminus: Small ribosomal subunit protein uS12 (124 aa).

The interval methionine 1–leucine 24 is disordered. A compositionally biased stretch (basic residues) spans arginine 9–lysine 20. 3-methylthioaspartic acid is present on aspartate 89. The segment at alanine 105–lysine 124 is disordered. Residues glutamine 112–lysine 124 show a composition bias toward basic residues.

It belongs to the universal ribosomal protein uS12 family. In terms of assembly, part of the 30S ribosomal subunit. Contacts proteins S8 and S17. May interact with IF1 in the 30S initiation complex.

In terms of biological role, with S4 and S5 plays an important role in translational accuracy. Its function is as follows. Interacts with and stabilizes bases of the 16S rRNA that are involved in tRNA selection in the A site and with the mRNA backbone. Located at the interface of the 30S and 50S subunits, it traverses the body of the 30S subunit contacting proteins on the other side and probably holding the rRNA structure together. The combined cluster of proteins S8, S12 and S17 appears to hold together the shoulder and platform of the 30S subunit. The sequence is that of Small ribosomal subunit protein uS12 from Christiangramia forsetii (strain DSM 17595 / CGMCC 1.15422 / KT0803) (Gramella forsetii).